The sequence spans 1496 residues: DENN domain-containing protein 4B (1496 aa).

The MABP domain maps to 44 to 203; it reads AEPITDVAVI…AVYLCYKVGL (160 aa). The region spanning 195 to 369 is the uDENN domain; the sequence is VYLCYKVGLA…NVPFPSPQRP (175 aa). The region spanning 390 to 526 is the cDENN domain; the sequence is PLPLSGASFL…PYKVLLATLT (137 aa). In terms of domain architecture, dDENN spans 528 to 644; that stretch reads LYQQLDQTYT…ECSFGSARHA (117 aa). The tract at residues 720-744 is disordered; sequence QPGALPVPGPSRSAPSSPAPRRTKQ. Over residues 729-739 the composition is skewed to low complexity; it reads PSRSAPSSPAP. PPR repeat units lie at residues 775–811 and 812–846; these read WFLC…VVLP and DEVC…GIVP. Disordered stretches follow at residues 891–970, 995–1055, 1067–1119, and 1205–1227; these read LRER…ARGA, VPWH…TPRR, PSRH…GSEW, and SRPS…PVPG. Low complexity predominate over residues 896 to 912; the sequence is QQQQQQQQQQQQQQQEQ. Polar residues-rich tracts occupy residues 913-924 and 935-944; these read VSAHQEAGSSQA and RPLQRQTTWA. At Ser-953 the chain carries Phosphoserine. The span at 1075 to 1090 shows a compositional bias: pro residues; sequence RIPPPELPPDLPPPAR. Phosphoserine is present on Ser-1092. A compositionally biased stretch (low complexity) spans 1105-1119; sequence GSTASESSASLGSEW.

The protein resides in the golgi apparatus. Its function is as follows. Guanine nucleotide exchange factor (GEF) which may activate RAB10. Promotes the exchange of GDP to GTP, converting inactive GDP-bound Rab proteins into their active GTP-bound form. The chain is DENN domain-containing protein 4B (DENND4B) from Homo sapiens (Human).